The primary structure comprises 292 residues: Protease HtpX homolog (292 aa).

2 consecutive transmembrane segments (helical) span residues isoleucine 4 to leucine 24 and leucine 38 to leucine 58. Histidine 144 provides a ligand contact to Zn(2+). Glutamate 145 is a catalytic residue. A Zn(2+)-binding site is contributed by histidine 148. Transmembrane regions (helical) follow at residues glycine 152–serine 172 and isoleucine 199–phenylalanine 219. A Zn(2+)-binding site is contributed by glutamate 224.

It belongs to the peptidase M48B family. The cofactor is Zn(2+).

The protein resides in the cell inner membrane. In Acidovorax ebreus (strain TPSY) (Diaphorobacter sp. (strain TPSY)), this protein is Protease HtpX homolog.